The chain runs to 916 residues: Chitin synthase B (916 aa).

Disordered regions lie at residues 1–75 (MAYH…GYSL) and 118–141 (ARSE…GGNG). Positions 14 to 26 (HTYDDGHQLRDLS) are enriched in basic and acidic residues. A compositionally biased stretch (polar residues) spans 59–75 (RGLTASPVQRPTSGYSL). 7 consecutive transmembrane segments (helical) span residues 544 to 561 (RWLN…MHFG), 588 to 608 (FLTW…MDLV), 629 to 649 (IINT…FILA), 664 to 684 (SFVA…YLVV), 716 to 736 (IIII…FMYL), 845 to 865 (LVTL…SEGL), and 884 to 904 (ALLW…TWFL).

The protein belongs to the chitin synthase family. Class III subfamily. As to quaternary structure, interacts with kibesin kinA. Activity requires trypsin activation, suggesting a zymogenic nature. In terms of processing, phosphorylated at yet unidentified residues in a N-terminal disordered region-dependent manner.

The protein localises to the cell membrane. The protein resides in the cell tip. It localises to the cell septum. It carries out the reaction [(1-&gt;4)-N-acetyl-beta-D-glucosaminyl](n) + UDP-N-acetyl-alpha-D-glucosamine = [(1-&gt;4)-N-acetyl-beta-D-glucosaminyl](n+1) + UDP + H(+). With respect to regulation, activity is stimulated by Mg(2+) and is inhibited by polyoxin D. In terms of biological role, polymerizes chitin, a structural polymer of the cell wall and septum, by transferring the sugar moiety of UDP-GlcNAc to the non-reducing end of the growing chitin polymer. Does not substantially contribute to the rigidity of the cell wall but is necessary for normal hyphal growth and organization. In addition to its functions in the formation of normal cell walls of hyphae, is also involved in conidiophore and conidia development. The chain is Chitin synthase B from Emericella nidulans (strain FGSC A4 / ATCC 38163 / CBS 112.46 / NRRL 194 / M139) (Aspergillus nidulans).